The chain runs to 267 residues: Eukaryotic translation initiation factor 3 subunit J (267 aa).

Disordered stretches follow at residues 1-128 (MAPS…DIDL) and 220-241 (KMRE…KTKV). A compositionally biased stretch (acidic residues) spans 28–46 (DEEEEDVLDSWDAAEDSEV). The stretch at 44 to 96 (SEVEREKAAKAAAAAAKAEAEAAAKKKSKAQRIEEHKQERKKQAEANESDEDS) forms a coiled coil. Residues 74–88 (QRIEEHKQERKKQAE) show a composition bias toward basic and acidic residues. Over residues 90 to 100 (NESDEDSDEDE) the composition is skewed to acidic residues. Composition is skewed to basic and acidic residues over residues 108 to 121 (RRTE…HAQD) and 220 to 231 (KMREERAADKGN).

The protein belongs to the eIF-3 subunit J family. As to quaternary structure, component of the eukaryotic translation initiation factor 3 (eIF-3) complex.

Its subcellular location is the cytoplasm. In terms of biological role, component of the eukaryotic translation initiation factor 3 (eIF-3) complex, which is involved in protein synthesis of a specialized repertoire of mRNAs and, together with other initiation factors, stimulates binding of mRNA and methionyl-tRNAi to the 40S ribosome. The eIF-3 complex specifically targets and initiates translation of a subset of mRNAs involved in cell proliferation. The protein is Eukaryotic translation initiation factor 3 subunit J (hcr1) of Neosartorya fischeri (strain ATCC 1020 / DSM 3700 / CBS 544.65 / FGSC A1164 / JCM 1740 / NRRL 181 / WB 181) (Aspergillus fischerianus).